We begin with the raw amino-acid sequence, 53 residues long: Conotoxin-like peptide 1 (53 aa).

Residues 1 to 18 form the signal peptide; that stretch reads MGVKSALFIMAVFAAANV. Intrachain disulfides connect C25–C39, C32–C43, and C38–C50.

The protein resides in the secreted. In Orgyia pseudotsugata multicapsid polyhedrosis virus (OpMNPV), this protein is Conotoxin-like peptide 1 (CTL-1).